A 635-amino-acid chain; its full sequence is MNSHKKEEWEEISSIGSCNSKSRVLKCRKKNGLIENEKVDIVAVKIINKKFFKRNETDILEKIRLFNIPRYYSHAEDDNYIYIYMEYIEDKKQLRFKESEIISMIADLTETLSFLHKHQILHRDIKPSNIILDKNGVLKLIDFGSSIIDQQQDDGDNICKESSFAITGTHTYMAPEVKKLHRSTKKSDVWSLGCTVLEIVGGNPKKIFDGIPIIPNHVSEIMVDFIKRCLIIDPNKRSHMEELLTHRLISSMVGQNKNRENNIEPKFNNDYLSSKFPERFAPRFEKPKWEIEFNELKFNKDDTVGGDGFFSVVKKGYYNETEVAIKLIKKAHGENVTVCDTFYHEVLIISNLRHPNIVQFIAACIKFDNKEVNHCIVSEWMSGGNLSQFISNERKILEINPHLRVKILLDIAKGMLYSHRQGIIHRDLTSNNVLLNFRKKKLLNNNSSNNDEQFYDSDEIIAKVCDFGLSSNQSESKKLRGGSIHYMAPENLNGSPINEKSDIYSFGLLVWQMFSYASPNTIYSPKEMASMVSDEKLNYRPQIPFNVPLKFKELITQCWDRNPLNRPKDFSEIIDKLKDINQIYFQDNSNASTISSTAITTTISTISISNSGNSSYSTSDDSSTYGSGFYNSGFL.

Protein kinase domains lie at 9-249 (WEEI…HRLI) and 299-585 (NKDD…QIYF). Residues 15–23 (IGSCNSKSR) and Lys-45 each bind ATP. Asp-124 (proton acceptor) is an active-site residue. ATP-binding positions include 305–313 (GGDGFFSVV) and Lys-326. Catalysis depends on Asp-427, which acts as the Proton acceptor.

In the N-terminal section; belongs to the protein kinase superfamily. Ser/Thr protein kinase family. This sequence in the C-terminal section; belongs to the protein kinase superfamily. TKL Tyr protein kinase family. C-terminal tyrosine kinase domain is capable of autophosphorylation, in vitro. As to expression, zakA and zak2 are coexpressed in prestalk cell population, zakA is enriched in pstB populations and zak1 in pstA populations. ZakA and zak2 are coexpressed in prespore cells, zakA expression levels are 10 fold higher than zak2.

The catalysed reaction is L-seryl-[protein] + ATP = O-phospho-L-seryl-[protein] + ADP + H(+). It carries out the reaction L-threonyl-[protein] + ATP = O-phospho-L-threonyl-[protein] + ADP + H(+). The enzyme catalyses L-tyrosyl-[protein] + ATP = O-phospho-L-tyrosyl-[protein] + ADP + H(+). Its function is as follows. Positive regulator of gsk3/gskA activity required for cell pattern formation and a downstream effector of carC. The kinases, gsk3/gskA, zakA and zak2, form part of a signaling pathway that responds to extracellular cyclic AMP. The pathway has a role in transcriptional regulation; required to direct prespore/spore fates during development. Zak2 negatively regulates prestalk differentiation by regulating expression of ecmA. Phosphorylates Y-214 of gsk3/gskA, in vitro. In Dictyostelium discoideum (Social amoeba), this protein is Dual specificity protein kinase zak2 (zak2).